The primary structure comprises 148 residues: 3-dehydroquinate dehydratase (148 aa).

Catalysis depends on Tyr23, which acts as the Proton acceptor. Asn75, His81, and Asp88 together coordinate substrate. His101 functions as the Proton donor in the catalytic mechanism. Substrate is bound by residues 102 to 103 (IS) and Arg112.

The protein belongs to the type-II 3-dehydroquinase family. As to quaternary structure, homododecamer.

The enzyme catalyses 3-dehydroquinate = 3-dehydroshikimate + H2O. The protein operates within metabolic intermediate biosynthesis; chorismate biosynthesis; chorismate from D-erythrose 4-phosphate and phosphoenolpyruvate: step 3/7. Functionally, catalyzes a trans-dehydration via an enolate intermediate. The protein is 3-dehydroquinate dehydratase of Methylococcus capsulatus (strain ATCC 33009 / NCIMB 11132 / Bath).